The following is a 219-amino-acid chain: 7-cyano-7-deazaguanine synthase (219 aa).

ATP is bound at residue 10–20 (FSGGQDSTTCL). 4 residues coordinate Zn(2+): Cys-188, Cys-197, Cys-200, and Cys-203.

Belongs to the QueC family. It depends on Zn(2+) as a cofactor.

The catalysed reaction is 7-carboxy-7-deazaguanine + NH4(+) + ATP = 7-cyano-7-deazaguanine + ADP + phosphate + H2O + H(+). It participates in purine metabolism; 7-cyano-7-deazaguanine biosynthesis. Its function is as follows. Catalyzes the ATP-dependent conversion of 7-carboxy-7-deazaguanine (CDG) to 7-cyano-7-deazaguanine (preQ(0)). The protein is 7-cyano-7-deazaguanine synthase of Bacteroides fragilis (strain ATCC 25285 / DSM 2151 / CCUG 4856 / JCM 11019 / LMG 10263 / NCTC 9343 / Onslow / VPI 2553 / EN-2).